A 195-amino-acid chain; its full sequence is Nucleoside triphosphate pyrophosphatase (195 aa).

D70 serves as the catalytic Proton acceptor.

This sequence belongs to the Maf family. The cofactor is a divalent metal cation.

The protein localises to the cytoplasm. The enzyme catalyses a ribonucleoside 5'-triphosphate + H2O = a ribonucleoside 5'-phosphate + diphosphate + H(+). It carries out the reaction a 2'-deoxyribonucleoside 5'-triphosphate + H2O = a 2'-deoxyribonucleoside 5'-phosphate + diphosphate + H(+). Its function is as follows. Nucleoside triphosphate pyrophosphatase. May have a dual role in cell division arrest and in preventing the incorporation of modified nucleotides into cellular nucleic acids. The chain is Nucleoside triphosphate pyrophosphatase from Cyanothece sp. (strain PCC 7425 / ATCC 29141).